A 128-amino-acid polypeptide reads, in one-letter code: Small ribosomal subunit protein uS9 (128 aa).

It belongs to the universal ribosomal protein uS9 family. As to quaternary structure, part of the 30S ribosomal subunit. Contacts proteins S7 and S10.

Part of the top of the head of the 30S subunit. The C-terminal region penetrates the head emerging in the P-site where it contacts tRNA. This chain is Small ribosomal subunit protein uS9 (rpsI), found in Thermus thermophilus (strain ATCC BAA-163 / DSM 7039 / HB27).